A 283-amino-acid chain; its full sequence is Dihydropteroate synthase (283 aa).

The Pterin-binding domain maps to 18–274 (PKIMGIVNLT…DVKATADALK (257 aa)). Asn-25 is a Mg(2+) binding site. Residues Thr-66, Asp-99, Asn-119, Asp-190, Lys-227, and 262 to 264 (RVH) each bind (7,8-dihydropterin-6-yl)methyl diphosphate.

It belongs to the DHPS family. Homodimer. Requires Mg(2+) as cofactor.

The catalysed reaction is (7,8-dihydropterin-6-yl)methyl diphosphate + 4-aminobenzoate = 7,8-dihydropteroate + diphosphate. It participates in cofactor biosynthesis; tetrahydrofolate biosynthesis; 7,8-dihydrofolate from 2-amino-4-hydroxy-6-hydroxymethyl-7,8-dihydropteridine diphosphate and 4-aminobenzoate: step 1/2. Its function is as follows. Catalyzes the condensation of para-aminobenzoate (pABA) with 6-hydroxymethyl-7,8-dihydropterin diphosphate (DHPt-PP) to form 7,8-dihydropteroate (H2Pte), the immediate precursor of folate derivatives. This chain is Dihydropteroate synthase (folP), found in Neisseria meningitidis serogroup C.